A 65-amino-acid polypeptide reads, in one-letter code: Alpha-toxin BeM10 (65 aa).

Residues 2–65 enclose the LCN-type CS-alpha/beta domain; it reads RDGYIADDKD…IKQKVSGKCN (64 aa). 4 disulfides stabilise this stretch: cysteine 12/cysteine 64, cysteine 16/cysteine 35, cysteine 22/cysteine 45, and cysteine 26/cysteine 47.

This sequence belongs to the long (4 C-C) scorpion toxin superfamily. Sodium channel inhibitor family. Alpha subfamily. In terms of tissue distribution, expressed by the venom gland.

The protein localises to the secreted. In terms of biological role, alpha toxins bind voltage-independently at site-3 of sodium channels (Nav) and inhibit the inactivation of the activated channels, thereby blocking neuronal transmission. Has paralytic activity in mice. In Mesobuthus eupeus (Lesser Asian scorpion), this protein is Alpha-toxin BeM10.